We begin with the raw amino-acid sequence, 600 residues long: Glutamine--fructose-6-phosphate aminotransferase [isomerizing] (600 aa).

Catalysis depends on Cys2, which acts as the Nucleophile; for GATase activity. The 216-residue stretch at 2–217 (CGIVGYIGYQ…DGELVIVTSE (216 aa)) folds into the Glutamine amidotransferase type-2 domain. 2 consecutive SIS domains span residues 283 to 422 (IINE…AKGF) and 452 to 590 (IASD…VDKP). Lys595 functions as the For Fru-6P isomerization activity in the catalytic mechanism.

Homodimer.

The protein localises to the cytoplasm. The enzyme catalyses D-fructose 6-phosphate + L-glutamine = D-glucosamine 6-phosphate + L-glutamate. Functionally, catalyzes the first step in hexosamine metabolism, converting fructose-6P into glucosamine-6P using glutamine as a nitrogen source. In Geobacillus kaustophilus (strain HTA426), this protein is Glutamine--fructose-6-phosphate aminotransferase [isomerizing].